Here is an 81-residue protein sequence, read N- to C-terminus: Neurotoxin LmNaTx11.1 (81 aa).

A signal peptide spans 1–18 (MKIVIIFFIAMMAVGVYS). In terms of domain architecture, LCN-type CS-alpha/beta spans 19-80 (KDGYLVKKNG…PTYPSSKTCS (62 aa)). 4 cysteine pairs are disulfide-bonded: Cys-29–Cys-79, Cys-33–Cys-56, Cys-42–Cys-61, and Cys-46–Cys-63.

Belongs to the long (4 C-C) scorpion toxin superfamily. Sodium channel inhibitor family. Beta subfamily. Expressed by the venom gland.

It localises to the secreted. Its function is as follows. Binds voltage-independently at site-4 of sodium channels (Nav) and shift the voltage of activation toward more negative potentials thereby affecting sodium channel activation and promoting spontaneous and repetitive firing. This Lychas mucronatus (Chinese swimming scorpion) protein is Neurotoxin LmNaTx11.1.